An 85-amino-acid chain; its full sequence is Acyl carrier protein (85 aa).

The region spanning 2-78 is the Carrier domain; it reads SQISERVIDL…DAIAYIESHA (77 aa). The residue at position 37 (S37) is an O-(pantetheine 4'-phosphoryl)serine.

It belongs to the acyl carrier protein (ACP) family. Post-translationally, 4'-phosphopantetheine is transferred from CoA to a specific serine of apo-ACP by AcpS. This modification is essential for activity because fatty acids are bound in thioester linkage to the sulfhydryl of the prosthetic group.

The protein localises to the cytoplasm. Its pathway is lipid metabolism; fatty acid biosynthesis. Its function is as follows. Carrier of the growing fatty acid chain in fatty acid biosynthesis. The chain is Acyl carrier protein from Azobacteroides pseudotrichonymphae genomovar. CFP2.